We begin with the raw amino-acid sequence, 97 residues long: YcgL domain-containing protein PSPPH_1548 (97 aa).

Positions 3–87 (RICSIYRSPK…AEDDYIEHLP (85 aa)) constitute a YcgL domain.

The polypeptide is YcgL domain-containing protein PSPPH_1548 (Pseudomonas savastanoi pv. phaseolicola (strain 1448A / Race 6) (Pseudomonas syringae pv. phaseolicola (strain 1448A / Race 6))).